A 272-amino-acid polypeptide reads, in one-letter code: Glutamate racemase (272 aa).

Substrate is bound by residues aspartate 12 to serine 13 and tyrosine 44 to glycine 45. Residue cysteine 75 is the Proton donor/acceptor of the active site. Asparagine 76 to threonine 77 serves as a coordination point for substrate. Residue cysteine 185 is the Proton donor/acceptor of the active site. Threonine 186–histidine 187 lines the substrate pocket.

The protein belongs to the aspartate/glutamate racemases family.

The catalysed reaction is L-glutamate = D-glutamate. It functions in the pathway cell wall biogenesis; peptidoglycan biosynthesis. In terms of biological role, provides the (R)-glutamate required for cell wall biosynthesis. The chain is Glutamate racemase from Mycobacterium leprae (strain TN).